Consider the following 297-residue polypeptide: MIQTRLKGMGVALITPFKEDDSVDYDALLRLVDYQLQNGTDFLCVLGTTAETPTLTKEEKDKIKRLIIERVNGRIPILLGVSSNCTRAVVETLKNDDMTGVDAVLVAVPYYNKPSQEGIYQHYKAIAEATDLPVVLYNVPGRTGVNMTAETTLRLARDFKNIIAIKEASGNITQMDDIIKNKPANFDVISGDDGITFPLITLGAVGVISVIGNAFPREFSRMTRLALQGDFANALTIHHKFTELFSLLFVDGNPAGVKAMLNVMGLIENKLRLPLVPTRITTFEKMRAILNELKIKC.

Threonine 49 contacts pyruvate. Tyrosine 137 (proton donor/acceptor) is an active-site residue. The active-site Schiff-base intermediate with substrate is the lysine 166. Isoleucine 208 serves as a coordination point for pyruvate.

The protein belongs to the DapA family. Homotetramer; dimer of dimers.

The protein resides in the cytoplasm. It carries out the reaction L-aspartate 4-semialdehyde + pyruvate = (2S,4S)-4-hydroxy-2,3,4,5-tetrahydrodipicolinate + H2O + H(+). It functions in the pathway amino-acid biosynthesis; L-lysine biosynthesis via DAP pathway; (S)-tetrahydrodipicolinate from L-aspartate: step 3/4. Its function is as follows. Catalyzes the condensation of (S)-aspartate-beta-semialdehyde [(S)-ASA] and pyruvate to 4-hydroxy-tetrahydrodipicolinate (HTPA). The protein is 4-hydroxy-tetrahydrodipicolinate synthase of Phocaeicola vulgatus (strain ATCC 8482 / DSM 1447 / JCM 5826 / CCUG 4940 / NBRC 14291 / NCTC 11154) (Bacteroides vulgatus).